The chain runs to 134 residues: Ribosome-binding factor A (134 aa).

Belongs to the RbfA family. As to quaternary structure, monomer. Binds 30S ribosomal subunits, but not 50S ribosomal subunits or 70S ribosomes.

It localises to the cytoplasm. Its function is as follows. One of several proteins that assist in the late maturation steps of the functional core of the 30S ribosomal subunit. Associates with free 30S ribosomal subunits (but not with 30S subunits that are part of 70S ribosomes or polysomes). Required for efficient processing of 16S rRNA. May interact with the 5'-terminal helix region of 16S rRNA. In Bartonella bacilliformis (strain ATCC 35685 / KC583 / Herrer 020/F12,63), this protein is Ribosome-binding factor A.